The sequence spans 461 residues: MRLFTYPTPDLIHIKLKVKIRIHPPLHISSTAGFDIIAYLLQIVQTAFKPLQMPSEIIGIRLCKGYFMSLHSDILVVGAGPAGLSFAAELAGSGLKVTLIERSPLTVLQNPPYDGREIALTHFSREIMQRLGMWDKIPENEIYPLRDAKVLNGRSDYQLHFPQPTEARGEPADCLGYLISNHNIRRAAYEVVSQLDNVSILTDTVVKEVKTSDNEAQVILENGKILTARLLLAADSRFSQTRRQLGISSDMHDYSRTMFVCRMKHTLSNQHTAYECFHYGRTIALLPLEEHLTNTVITVDTDKINSVQNLSPEELAASVKEQLKGRLGDMELVSSIHHYPLVGMIAKRFYGKRSALIGDAAVGMHPVTAHGFNLGLSSADILAKLILEAEQRGQDIGASSLLEKYSNKHMLHAHPLYHGTNMMLKLFTNETAPAKLLRGLVLRAGNNFPPLKKLITKQLTG.

The protein belongs to the UbiH/COQ6 family. FAD serves as cofactor.

It catalyses the reaction a 2-(all-trans-polyprenyl)phenol + NADPH + O2 + H(+) = a 3-(all-trans-polyprenyl)benzene-1,2-diol + NADP(+) + H2O. The enzyme catalyses a 5-methoxy-2-methyl-3-(all-trans-polyprenyl)benzene-1,4-diol + AH2 + O2 = a 3-demethylubiquinol + A + H2O. It participates in cofactor biosynthesis; ubiquinone biosynthesis. Functionally, catalyzes the hydroxylation of three positions of the aromatic ring during ubiquinone biosynthesis. The chain is Ubiquinone hydroxylase UbiM from Neisseria meningitidis serogroup C / serotype 2a (strain ATCC 700532 / DSM 15464 / FAM18).